A 384-amino-acid chain; its full sequence is Lipid-A-disaccharide synthase (384 aa).

This sequence belongs to the LpxB family.

The enzyme catalyses a lipid X + a UDP-2-N,3-O-bis[(3R)-3-hydroxyacyl]-alpha-D-glucosamine = a lipid A disaccharide + UDP + H(+). The protein operates within bacterial outer membrane biogenesis; LPS lipid A biosynthesis. In terms of biological role, condensation of UDP-2,3-diacylglucosamine and 2,3-diacylglucosamine-1-phosphate to form lipid A disaccharide, a precursor of lipid A, a phosphorylated glycolipid that anchors the lipopolysaccharide to the outer membrane of the cell. The polypeptide is Lipid-A-disaccharide synthase (Cellvibrio japonicus (strain Ueda107) (Pseudomonas fluorescens subsp. cellulosa)).